The sequence spans 688 residues: Glycine--tRNA ligase beta subunit (688 aa).

Belongs to the class-II aminoacyl-tRNA synthetase family. As to quaternary structure, tetramer of two alpha and two beta subunits.

It is found in the cytoplasm. The catalysed reaction is tRNA(Gly) + glycine + ATP = glycyl-tRNA(Gly) + AMP + diphosphate. The sequence is that of Glycine--tRNA ligase beta subunit from Histophilus somni (strain 2336) (Haemophilus somnus).